Here is a 277-residue protein sequence, read N- to C-terminus: GPALPP motifs-containing protein 1 (277 aa).

Residues 1–240 are disordered; it reads MARDLIGPAL…VWTDTPADRE (240 aa). An N-acetylalanine modification is found at Ala-2. The short motif at 7–12 is the GPALPP motif 1 element; the sequence is GPALPP. Ser-28 is modified (phosphoserine). The GPALPP motif 2 motif lies at 32-37; that stretch reads GPALPP. Acidic residues-rich tracts occupy residues 60-69 and 81-90; these read GNQESEEDDT and DDDDDDDDEG. Residues 93 to 98 carry the GPALPP motif 3 motif; the sequence is GPALPP. At Ser-106 the chain carries Phosphoserine. Residues 108 to 117 are compositionally biased toward pro residues; sequence PRPMIGPALP. A GPALPP motif 4 motif is present at residues 113–118; the sequence is GPALPP. 2 positions are modified to phosphoserine: Ser-138 and Ser-143. The residue at position 147 (Thr-147) is a Phosphothreonine. Phosphoserine occurs at positions 149 and 150. Basic and acidic residues predominate over residues 172–196; that stretch reads EFEKRAQRMKEKLTKGDDDSSKPIT.

The sequence is that of GPALPP motifs-containing protein 1 (GPALPP1) from Bos taurus (Bovine).